The primary structure comprises 97 residues: Small integral membrane protein 8 (97 aa).

Low complexity predominate over residues 1–14; that stretch reads MSSPSSESSNAKSS. The disordered stretch occupies residues 1–26; the sequence is MSSPSSESSNAKSSPPKEEYRTPGLR. Residues 49-69 form a helical membrane-spanning segment; the sequence is VMVFGIVTITMCVAYIAYLHA.

It belongs to the SMIM8 family.

The protein resides in the membrane. This Xenopus tropicalis (Western clawed frog) protein is Small integral membrane protein 8 (smim8).